The following is an 800-amino-acid chain: MSLVYLLIAILVIMAMILLTSKRRAMAKYAGYIALTAPVIASIYFLLQVPSVIKQHYLSVSIPWMTSLDINVDLRLDGLSLMFSLIISLIGIAVFFYATQYLSSRKDNLPRFYLYLTLFMFSMLGIVLADNTILMYVFWELTSVSSFLLISYWYNNGDSQFGAMQSFMITVFGGLALLVGFIMLYIMTGTNNITEILGQADHIKNHALFIPMIIMFLLGAFTKSAQFPFHIWLPRAMAAPTPVSAYLHSATMVKAGIFLLLRFTPLLGLSNMYIYIVTFVGLITMLFGSITALKQWDLKGILAYSTISQLGMIMAMVGIGGGYAQHQQDAIASIYVFVLFAALFHLMNHAIFKCALFMGVGILDHEAGSRDIRILSGMRQLFPKMNLVMMIAALSMAGVPFLNGFLSKEMFLDALTQTGQLSQFSLISMIIIVCMGVIASIFTFTYALYMVKEVFWTKYDSKVFTKKNIHEPWLFSLPSLILMVLVPVIFFVPNIFGKGIIVPALRGVSGGNHQIDPLVPHVSQWHGFNIPLLLTIIIILLGSVLAIKVDWKKVFTGKIRQISVSKGYEMVYRQFEKFTTKRFKRVMQDRLNQYIIMTLGIFMVIIGYGYIRIGLPKVHQLHVSEFGPLEVILAIVTVIIGLSLIFIRQRLTMVILNGVIGFVVTLFFIAMKAPDLALTQLVVETITTILFIVSFSRLPNVPRSKVNKKREIIKISVSLMMALIVVSLIFIAQQADGLASISNFYLRADKLTGGKNIVNAILGDFRALDTLFEGLVLIITGLGIYTLLNYQDRRGQDERE.

Helical transmembrane passes span 1–21 (MSLV…LLTS), 33–53 (IALT…PSVI), 78–98 (GLSL…FFYA), 118–138 (LFMF…MYVF), 167–187 (FMIT…LYIM), 207–227 (ALFI…SAQF), 241–261 (TPVS…FLLL), 273–293 (YIYI…ITAL), 300–320 (GILA…VGIG), 331–351 (IASI…NHAI), 387–407 (LVMM…GFLS), 424–444 (FSLI…IFTF), 472–492 (PWLF…IFFV), 527–547 (GFNI…VLAI), 595–615 (IIMT…RIGL), 627–647 (GPLE…LIFI), 651–671 (LTMV…FIAM), 676–696 (LALT…VSFS), 712–732 (IIKI…IFIA), and 768–788 (LDTL…YTLL).

This sequence belongs to the CPA3 antiporters (TC 2.A.63) subunit A family. In terms of assembly, may form a heterooligomeric complex that consists of seven subunits: mnhA2, mnhB2, mnhC2, mnhD2, mnhE2, mnhF2 and mnhG2.

The protein localises to the cell membrane. The sequence is that of Putative antiporter subunit mnhA2 (mnhA2) from Staphylococcus aureus (strain MRSA252).